A 151-amino-acid chain; its full sequence is Pollen allergen Sal k 5.0101 (151 aa).

3 cysteine pairs are disulfide-bonded: cysteine 17-cysteine 88, cysteine 20-cysteine 132, and cysteine 41-cysteine 76. Asparagine 43 carries N-linked (GlcNAc...) asparagine glycosylation.

Belongs to the Ole e I family. In terms of processing, N-glycosylated. Contains fucose monosaccharides in the glycan structure. Expressed in pollen (at protein level).

It is found in the secreted. In Kali turgidum (Prickly saltwort), this protein is Pollen allergen Sal k 5.0101.